A 351-amino-acid chain; its full sequence is MSDIMSNFSWLYGKPVATGKLKQLPEHFIVKEILGFEFTGSGEHLMVKIRKTGENTKYVANELAKFCGVKSKNVSWAGLKDRHAVTEQWLSVQVANSDELSFAKFEATHPGVEILEVTRHNKKLRPGDLQGNQFQVIATEVTDIEDVLARLEKVKLTGVPNYFGSQRFGHEGNNVNEARRWGRDNVRTRDNSKRSFYLSAARSWIFNHIVSQRITEGYFSQPVDGDILLDRNDRIVNENVTSEESIQKIQNGELSITAALAGDNQLPTTGTALTLEQPHLDAEPDLMALIRGNRMRHERRAIELHPENLTWSAEGDTLTLNFSLTSGSFATVIVRELLQEIEVERTYSSND.

Asp81 functions as the Nucleophile in the catalytic mechanism. Residues Gly158–Leu304 form the TRUD domain.

This sequence belongs to the pseudouridine synthase TruD family.

It catalyses the reaction uridine(13) in tRNA = pseudouridine(13) in tRNA. Responsible for synthesis of pseudouridine from uracil-13 in transfer RNAs. The chain is tRNA pseudouridine synthase D from Aliivibrio fischeri (strain MJ11) (Vibrio fischeri).